Consider the following 155-residue polypeptide: Endoribonuclease YbeY (155 aa).

Positions 110, 114, and 120 each coordinate Zn(2+).

The protein belongs to the endoribonuclease YbeY family. Zn(2+) serves as cofactor.

It is found in the cytoplasm. In terms of biological role, single strand-specific metallo-endoribonuclease involved in late-stage 70S ribosome quality control and in maturation of the 3' terminus of the 16S rRNA. This is Endoribonuclease YbeY from Deinococcus geothermalis (strain DSM 11300 / CIP 105573 / AG-3a).